We begin with the raw amino-acid sequence, 456 residues long: Bifunctional protein GlmU (456 aa).

Residues 1 to 227 (MKLRVVILAA…AQEVEGANNR (227 aa)) are pyrophosphorylase. UDP-N-acetyl-alpha-D-glucosamine-binding positions include 8-11 (LAAG), Lys22, Gln73, 78-79 (GT), 100-102 (YGD), Gly137, Glu152, Asn167, and Asn225. Asp102 lines the Mg(2+) pocket. A Mg(2+)-binding site is contributed by Asn225. A linker region spans residues 228-248 (QQLASLERALQQRQAEELMTQ). Residues 249–456 (GVTLIDPARF…WQRPQSKKGT (208 aa)) form an N-acetyltransferase region. 2 residues coordinate UDP-N-acetyl-alpha-D-glucosamine: Arg331 and Lys349. His361 (proton acceptor) is an active-site residue. Tyr364 and Asn375 together coordinate UDP-N-acetyl-alpha-D-glucosamine. Acetyl-CoA contacts are provided by residues Ala378, 384–385 (NY), Ser403, Ala421, and Arg438.

The protein in the N-terminal section; belongs to the N-acetylglucosamine-1-phosphate uridyltransferase family. This sequence in the C-terminal section; belongs to the transferase hexapeptide repeat family. Homotrimer. Requires Mg(2+) as cofactor.

It is found in the cytoplasm. It catalyses the reaction alpha-D-glucosamine 1-phosphate + acetyl-CoA = N-acetyl-alpha-D-glucosamine 1-phosphate + CoA + H(+). The enzyme catalyses N-acetyl-alpha-D-glucosamine 1-phosphate + UTP + H(+) = UDP-N-acetyl-alpha-D-glucosamine + diphosphate. Its pathway is nucleotide-sugar biosynthesis; UDP-N-acetyl-alpha-D-glucosamine biosynthesis; N-acetyl-alpha-D-glucosamine 1-phosphate from alpha-D-glucosamine 6-phosphate (route II): step 2/2. The protein operates within nucleotide-sugar biosynthesis; UDP-N-acetyl-alpha-D-glucosamine biosynthesis; UDP-N-acetyl-alpha-D-glucosamine from N-acetyl-alpha-D-glucosamine 1-phosphate: step 1/1. It functions in the pathway bacterial outer membrane biogenesis; LPS lipid A biosynthesis. In terms of biological role, catalyzes the last two sequential reactions in the de novo biosynthetic pathway for UDP-N-acetylglucosamine (UDP-GlcNAc). The C-terminal domain catalyzes the transfer of acetyl group from acetyl coenzyme A to glucosamine-1-phosphate (GlcN-1-P) to produce N-acetylglucosamine-1-phosphate (GlcNAc-1-P), which is converted into UDP-GlcNAc by the transfer of uridine 5-monophosphate (from uridine 5-triphosphate), a reaction catalyzed by the N-terminal domain. The sequence is that of Bifunctional protein GlmU from Idiomarina loihiensis (strain ATCC BAA-735 / DSM 15497 / L2-TR).